The chain runs to 123 residues: SPbeta prophage-derived uncharacterized protein YorE (123 aa).

This is SPbeta prophage-derived uncharacterized protein YorE (yorE) from Bacillus subtilis (strain 168).